We begin with the raw amino-acid sequence, 273 residues long: Proteasome subunit beta type-5-B (273 aa).

The propeptide at 1–57 (MKLDTSGLETTMPVIGFGSNSEMLDGFSSAPSFDLPRTTDFDGFQKKAVEMVKPAKG) is removed in mature form. Threonine 58 (nucleophile) is an active-site residue.

The protein belongs to the peptidase T1B family. Component of the 20S core complex of the 26S proteasome. The 26S proteasome is composed of a core protease (CP), known as the 20S proteasome, capped at one or both ends by the 19S regulatory particle (RP/PA700). The 20S proteasome core is composed of 28 subunits that are arranged in four stacked rings, resulting in a barrel-shaped structure. The two end rings are each formed by seven alpha subunits, and the two central rings are each formed by seven beta subunits. The catalytic chamber with the active sites is on the inside of the barrel.

Its subcellular location is the cytoplasm. The protein localises to the nucleus. The enzyme catalyses Cleavage of peptide bonds with very broad specificity.. In terms of biological role, the proteasome is a multicatalytic proteinase complex which is characterized by its ability to cleave peptides with Arg, Phe, Tyr, Leu, and Glu adjacent to the leaving group at neutral or slightly basic pH. The proteasome has an ATP-dependent proteolytic activity. This is Proteasome subunit beta type-5-B (PBE2) from Arabidopsis thaliana (Mouse-ear cress).